Consider the following 251-residue polypeptide: MDNICELFDEILPLIIEYLSDHDKVKFMTTCSRLYYFIDKVYYENIYDYNKIYHLEFTERFKRIRFCAINESIPSVITDLTLDREFTGSLGNCKFPRLTYIKLSQSQYDTNKNYIPSNIEIDIPNPFKNFHLTEFDMSKLFDDSYYIFSGTYMGSSSWYSTKTILRSRNFLSYYWNLDIVNYDRLESPEPESQENFRPIFPTESNNNKPVNKSQPQIKKSRSQKKFDKFYYQKKIVSNNNKRPKSFMKYRR.

The F-box domain occupies 1-46; that stretch reads MDNICELFDEILPLIIEYLSDHDKVKFMTTCSRLYYFIDKVYYENI. The segment at 188–251 is disordered; it reads PEPESQENFR…RPKSFMKYRR (64 aa). A compositionally biased stretch (polar residues) spans 202–217; sequence TESNNNKPVNKSQPQI. A compositionally biased stretch (basic residues) spans 241–251; sequence KRPKSFMKYRR.

The polypeptide is Putative F-box protein L166 (Acanthamoeba polyphaga (Amoeba)).